The primary structure comprises 336 residues: MRIAVVCNSAFTGVINRFGQPYPQPPQPWPQGRIADSVVAALQECGHETLLCEGDKGLLTTLERFMPPDPLARTSGMVFNLAEGIQGEYRFTHVPAMLEMAGVPYTGSSPLGHGLTDDKVISKTLMRDSGVPTPNFSIMRRGTESTDDLRFPVVVKPRHEDNSFGLQLVHEPAQLQQAVKMIVTKYAQDALVEEYIDGREIHVALLGNQEVEVLPMVEFELGEHEAPLLTWEAKYLAAVQPPKTCPAKIESKLATLLRDISVATFRACQCRDYARVDLRLDRSGQPFVLEINSMPGLSTHSAYVLAAMTAGHSYSSLINGILDVAHRRYFGNGILG.

In terms of domain architecture, ATP-grasp spans 123–323 (KTLMRDSGVP…YSSLINGILD (201 aa)).

This sequence belongs to the D-alanine--D-alanine ligase family.

In terms of biological role, could be involved in the biosynthesis of a cell wall component. This is an uncharacterized protein from Sinorhizobium fredii (strain NBRC 101917 / NGR234).